Consider the following 303-residue polypeptide: Heme A synthase (303 aa).

The Cytoplasmic portion of the chain corresponds to 1-8 (MFGKKNLK). The chain crosses the membrane as a helical span at residues 9 to 29 (WLGVVATLMMTFVQLGGALVT). Topologically, residues 30–67 (KTGSADGCGSSWPLCHGALIPEFFPIDTIIELSHRAVS) are extracellular. An intrachain disulfide couples Cys-37 to Cys-44. Residue Glu-60 is part of the active site. His-63 contributes to the heme o binding site. Residues 68-88 (ALSLLMVLWLVITAWKHIGYI) traverse the membrane as a helical segment. At 89–93 (KEIKP) the chain is on the cytoplasmic side. A helical membrane pass occupies residues 94–114 (LSIISVGFLLLQALIGAAAVI). Residues 115–125 (WQQNDYVLALH) are Extracellular-facing. His-125 provides a ligand contact to heme o. Residues 126-146 (FGISLISFSSVFLITLIIFSI) form a helical membrane-spanning segment. Over 147 to 163 (DQKYEADELYIKKPLRR) the chain is Cytoplasmic. Residues 164 to 184 (LTWLMAIIIYCGVYTGALVRH) form a helical membrane-spanning segment. Residues 185-215 (ADASLAYGGWPLPFHDLVPHSEQDWVQLTHR) lie on the Extracellular side of the membrane. His-214 is a binding site for heme b. Residues 216–236 (IMAFIVFTIIMITYIHAVKNY) form a helical membrane-spanning segment. Residues 237–244 (PNNRTVHY) are Cytoplasmic-facing. Residues 245 to 265 (GYTAAFILVILQVITGALSIM) traverse the membrane as a helical segment. The Extracellular segment spans residues 266 to 270 (TNVNL). The helical transmembrane segment at 271 to 291 (LIALFHALFITYLFGMTTYFI) threads the bilayer. His-276 is a binding site for heme b. Residues 292–303 (MLMLRSVRSDKQ) lie on the Cytoplasmic side of the membrane.

This sequence belongs to the COX15/CtaA family. Type 1 subfamily. In terms of assembly, interacts with CtaB. Heme b serves as cofactor.

It localises to the cell membrane. It catalyses the reaction Fe(II)-heme o + 2 A + H2O = Fe(II)-heme a + 2 AH2. Its pathway is porphyrin-containing compound metabolism; heme A biosynthesis; heme A from heme O: step 1/1. Functionally, catalyzes the conversion of heme O to heme A by two successive hydroxylations of the methyl group at C8. The first hydroxylation forms heme I, the second hydroxylation results in an unstable dihydroxymethyl group, which spontaneously dehydrates, resulting in the formyl group of heme A. The polypeptide is Heme A synthase (Staphylococcus aureus (strain MSSA476)).